A 284-amino-acid polypeptide reads, in one-letter code: Nucleotide-binding protein Shal_3708 (284 aa).

An ATP-binding site is contributed by 8 to 15 (GRSGSGKS). A GTP-binding site is contributed by 56–59 (DIRN).

The protein belongs to the RapZ-like family.

Functionally, displays ATPase and GTPase activities. The protein is Nucleotide-binding protein Shal_3708 of Shewanella halifaxensis (strain HAW-EB4).